We begin with the raw amino-acid sequence, 554 residues long: Estrogen receptor beta (554 aa).

Positions 25–173 (TEIKNSPAGV…NPGSKKDAHF (149 aa)) are modulating. NR C4-type zinc fingers lie at residues 174–194 (CAVCSDYASGYHYGVWSCEGC) and 210–234 (CPATNQCTIDKNRRKSCQACRLRKC). Positions 174 to 239 (CAVCSDYASG…RLRKCYEVGM (66 aa)) form a DNA-binding region, nuclear receptor. An NR LBD domain is found at 289 to 521 (SPEQFVLTLL…DLLLEMLNAH (233 aa)). The tract at residues 529 to 554 (PLATHPEFGPLEQMEPGESLRKGEPQ) is disordered.

It belongs to the nuclear hormone receptor family. NR3 subfamily. Binds DNA as a homodimer. Can form a heterodimer with ER-alpha. Brain, pituitary, skeletal muscle, liver, adrenal, kidney, intestine and ovary.

Its subcellular location is the nucleus. Its function is as follows. Binds estrogens with an affinity similar to that of ER-alpha, and activates expression of reporter genes containing estrogen response elements (ERE) in an estrogen-dependent manner. Locally synthesized estrogens may act via ER beta, in addition to ER alpha, to mediate seasonal or developmental effects on nearby song nuclei. This is Estrogen receptor beta (ESR2) from Sturnus vulgaris (Starling).